A 293-amino-acid chain; its full sequence is Delta(3,5)-Delta(2,4)-dienoyl-CoA isomerase, mitochondrial (293 aa).

Residues 84-88 (AGLNL) and glycine 142 contribute to the substrate site.

The protein belongs to the enoyl-CoA hydratase/isomerase family.

The protein localises to the mitochondrion. It catalyses the reaction (3E,5Z)-octadienoyl-CoA = (2E,4E)-octadienoyl-CoA. The catalysed reaction is (3E,5Z,8Z,11Z,14Z)-eicosapentaenoyl-CoA = (2E,4E,8Z,11Z,14Z)-eicosapentaenoyl-CoA. It participates in lipid metabolism; fatty acid beta-oxidation. In terms of biological role, isomerization of 3-trans,5-cis-dienoyl-CoA to 2-trans,4-trans-dienoyl-CoA. This is Delta(3,5)-Delta(2,4)-dienoyl-CoA isomerase, mitochondrial (ech1) from Dictyostelium discoideum (Social amoeba).